Consider the following 343-residue polypeptide: tRNA N6-adenosine threonylcarbamoyltransferase (343 aa).

Histidine 111 and histidine 115 together coordinate Fe cation. Substrate is bound by residues 134–138 (LVSGG), aspartate 167, glycine 180, and asparagine 276. Residue aspartate 304 coordinates Fe cation.

Belongs to the KAE1 / TsaD family. The cofactor is Fe(2+).

The protein resides in the cytoplasm. The enzyme catalyses L-threonylcarbamoyladenylate + adenosine(37) in tRNA = N(6)-L-threonylcarbamoyladenosine(37) in tRNA + AMP + H(+). Its function is as follows. Required for the formation of a threonylcarbamoyl group on adenosine at position 37 (t(6)A37) in tRNAs that read codons beginning with adenine. Is involved in the transfer of the threonylcarbamoyl moiety of threonylcarbamoyl-AMP (TC-AMP) to the N6 group of A37, together with TsaE and TsaB. TsaD likely plays a direct catalytic role in this reaction. The chain is tRNA N6-adenosine threonylcarbamoyltransferase from Hahella chejuensis (strain KCTC 2396).